A 131-amino-acid chain; its full sequence is Small ribosomal subunit protein uS11 (131 aa).

This sequence belongs to the universal ribosomal protein uS11 family. As to quaternary structure, part of the 30S ribosomal subunit. Interacts with proteins S7 and S18. Binds to IF-3.

In terms of biological role, located on the platform of the 30S subunit, it bridges several disparate RNA helices of the 16S rRNA. Forms part of the Shine-Dalgarno cleft in the 70S ribosome. This chain is Small ribosomal subunit protein uS11, found in Bacillus pumilus (strain SAFR-032).